The chain runs to 668 residues: Eukaryotic translation initiation factor 3 subunit L (668 aa).

Positions M1–N17 are enriched in polar residues. The interval M1 to E42 is disordered. The segment covering Q18–G32 has biased composition (low complexity). Positions G33–E42 are enriched in acidic residues. Residues S358–F552 enclose the PCI domain. Residues A625–A668 are disordered. The segment covering K648–P662 has biased composition (low complexity).

This sequence belongs to the eIF-3 subunit L family. Component of the eukaryotic translation initiation factor 3 (eIF-3) complex.

Its subcellular location is the cytoplasm. Its function is as follows. Component of the eukaryotic translation initiation factor 3 (eIF-3) complex, which is involved in protein synthesis of a specialized repertoire of mRNAs and, together with other initiation factors, stimulates binding of mRNA and methionyl-tRNAi to the 40S ribosome. The eIF-3 complex specifically targets and initiates translation of a subset of mRNAs involved in cell proliferation. The polypeptide is Eukaryotic translation initiation factor 3 subunit L (Mycosarcoma maydis (Corn smut fungus)).